Reading from the N-terminus, the 118-residue chain is BolA-like protein 3 (118 aa).

The protein belongs to the BolA/IbaG family. In terms of assembly, interacts with NFU1.

It is found in the mitochondrion matrix. Functionally, acts as a mitochondrial iron-sulfur (Fe-S) cluster assembly factor that facilitates [4Fe-4S] cluster insertion into a subset of mitochondrial proteins such as lipoyl synthase (LS) and succinate dehydrogenase (SDH). Required during the last step of iron-sulfur protein assembly when the iron-sulfur cluster is inserted into the target protein. Acts together with NFU1, later than BOL1 and GRX5 in the [4Fe-4S] cluster insertion process. Not required for [2Fe-2S] cluster insertion into mitochondrial proteins. This chain is BolA-like protein 3, found in Saccharomyces cerevisiae (strain ATCC 204508 / S288c) (Baker's yeast).